We begin with the raw amino-acid sequence, 229 residues long: Elongation factor 1-delta 1 (229 aa).

The tract at residues 80-109 is disordered; that stretch reads ESTAVPSASTPDVADAKAPAADDDDDDDVD. The span at 100–109 shows a compositional bias: acidic residues; the sequence is ADDDDDDDVD.

The protein belongs to the EF-1-beta/EF-1-delta family. EF-1 is composed of 4 subunits: alpha, beta (1B-alpha=beta'), delta (1B-beta), and gamma (1B-gamma).

EF-1-beta and EF-1-beta' stimulate the exchange of GDP bound to EF-1-alpha to GTP. The chain is Elongation factor 1-delta 1 from Oryza sativa subsp. japonica (Rice).